We begin with the raw amino-acid sequence, 317 residues long: Acetyl-coenzyme A carboxylase carboxyl transferase subunit alpha (317 aa).

The CoA carboxyltransferase C-terminal domain maps to 40-293 (LEVRVREAIL…GDVIANALAE (254 aa)).

It belongs to the AccA family. Acetyl-CoA carboxylase is a heterohexamer composed of biotin carboxyl carrier protein (AccB), biotin carboxylase (AccC) and two subunits each of ACCase subunit alpha (AccA) and ACCase subunit beta (AccD).

The protein localises to the cytoplasm. The catalysed reaction is N(6)-carboxybiotinyl-L-lysyl-[protein] + acetyl-CoA = N(6)-biotinyl-L-lysyl-[protein] + malonyl-CoA. Its pathway is lipid metabolism; malonyl-CoA biosynthesis; malonyl-CoA from acetyl-CoA: step 1/1. Component of the acetyl coenzyme A carboxylase (ACC) complex. First, biotin carboxylase catalyzes the carboxylation of biotin on its carrier protein (BCCP) and then the CO(2) group is transferred by the carboxyltransferase to acetyl-CoA to form malonyl-CoA. The protein is Acetyl-coenzyme A carboxylase carboxyl transferase subunit alpha of Rhizobium etli (strain CIAT 652).